A 91-amino-acid chain; its full sequence is Small ribosomal subunit protein bS18 (91 aa).

Belongs to the bacterial ribosomal protein bS18 family. In terms of assembly, part of the 30S ribosomal subunit. Forms a tight heterodimer with protein bS6.

In terms of biological role, binds as a heterodimer with protein bS6 to the central domain of the 16S rRNA, where it helps stabilize the platform of the 30S subunit. This chain is Small ribosomal subunit protein bS18, found in Wolbachia pipientis wMel.